The chain runs to 441 residues: MDMLQFFRDALVQETGRHVDNDDFDALFSELGADPLVGVAVIERVTNKTVEKAPRAARPPREAPLPRGNVRNAFQDACSHVQEFLRKAGSANFWSRVYPAQRQLVLAFVNDAFDRLGCSLADMPVGTIVTYPRGVLDKHRRVFDGAIFEILADGGLVNVDPELGAIRTSTVVDKTPPQQILATIILEHPQFANLHRLLNVTGSQFAECLTGRLDPIKLLFGRSKDLLQDFYTNAPMSLAASLHLVAVIKRLLADGEYRPGKSIDILEVGAGLGGTTRFVVEALIEAQVPFRYVYTDISASFFAASKNRYKSLPPGSSMEFLVLDVEIPPPETLLGGFDVVVSTNCIHATRNLGVSCSNVRKLLRGGGFFALIEFTSRMYWLDLVFGLLDGWWLFEDGRKHCTVDETVWEEKLQLSGFSDVLWADVEGDDKSSLQLLVACTD.

The segment at leucine 266 to phenylalanine 368 is methyltransferase (CMeT) domain.

The protein belongs to the methyltransferase superfamily.

Its pathway is secondary metabolite biosynthesis. In terms of biological role, polyketide methyltransferase; part of the gene cluster that mediates the biosynthesis of ustilaginoidins, dimeric gamma-naphthopyrones isolated from different fungal species. The first step in the biosynthesis of ustilaginoidins is the production of gamma-naphthopyrone precursor YWA1 by the non-reducing polyketide synthase ustP, via condensation of one acetyl-CoA starter unit with 6 malonyl-CoA units. YWA1 is then probably substrate of the ustZ to yield norrubrofusarin via a dehydration reaction. A key enzyme in the biosynthetic pathway is the laccase ustL, which catalyzes the oxidative dimerization of norrubrofusarin to ustilaginoidin A. It can produce the M- and P-atropisomers in varying amounts, depending on the reaction conditions. For the biosynthesis of 3-methylustilaginoid in derivatives such as chaetochromin A, a methylated derivative of YWA1 is required. The C-methylation is considered to be catalyzed by ustM, the phosphopantetheine attachment site of which indicates that it acts on the growing polyketide chain before release of the product. For the biosynthesis of chaetochromin A, it is assumed that saturation of the D2 double bond takes place before dimerization, and is probably catalyzed by an external reductase because no candidate gene was identified within the cluster. The polypeptide is Polyketide methyltransferase ustM (Ustilaginoidea virens (Rice false smut fungus)).